The sequence spans 243 residues: Phomoidride biosynthesis cluster protein B (243 aa).

The protein belongs to the tstB family.

Phosphatidylethanolamine-binding protein; part of the gene cluster that mediates the biosynthesis of the antihypercholesterolemic agents phomoidrides which are dimeric anhydrides. Within the pathway, tstB is not essential for dimerization and its function has still to be determined. The pathway begins with the highly reducing polyketide synthase tstA that catalyzes the formation of a C12-fatty acyl-ACP, starting from one acetate and 5 malonate units. The hydrolase tstM is involved in the release of the C12-fatty acyl chain from phiA. The alkylcitrate synthase (ACS) tstJ and the alkylcitrate dehydratase (ACDH) tstI then give rise to decarboxylated monomeric anhydrides by coupling the C12-fatty acyl chain with oxalacetic acid. The cyclase tstC is responsible for the dimerization of the monomeric anhydrides which leads to the production of prephomoidride that contains the characteristic bicyclo[4.3.1]deca-1,6-diene system of phomoidrides. Iterative oxidation catalyzed by the alpha-ketoglutarate-dependent dioxygenase tstK produced then phomoidride A. Finally, the methyltransferase tstE converts phomoidride A to phomoidride B via an acetalization reaction. The phosphatidylethanolamine-binding protein tstB and tstN are not essential for dimerization and their functions have still to be determined. This is Phomoidride biosynthesis cluster protein B from Talaromyces stipitatus (strain ATCC 10500 / CBS 375.48 / QM 6759 / NRRL 1006) (Penicillium stipitatum).